Reading from the N-terminus, the 208-residue chain is CASP-like protein 2U9 (208 aa).

The Cytoplasmic segment spans residues 1–27 (MGVADAPSPGNVPVLGDMKNRSAAEMK). The chain crosses the membrane as a helical span at residues 28–48 (ISVLALRALTLVLLVIALALM). Residues 49–87 (VSNKQTQSIPIKLPGMASTIFLKKTATFSQITGVQYYVG) lie on the Extracellular side of the membrane. The chain crosses the membrane as a helical span at residues 88 to 108 (ALSVAVAYMFFQMLAGLFTIL). Residues 109-120 (TTGSIVGSKSRA) lie on the Cytoplasmic side of the membrane. Residues 121–141 (WVTFILDQLIAYLMVSAATVV) traverse the membrane as a helical segment. The Extracellular portion of the chain corresponds to 142 to 168 (AEVGYIARRGETKVGWNQVCSDFKHYC). The chain crosses the membrane as a helical span at residues 169–189 (FIYGFSLVNAFLATIAFLPVV). The Cytoplasmic segment spans residues 190–208 (AVSAFHLFRMYGAQSAQSK).

The protein belongs to the Casparian strip membrane proteins (CASP) family. As to quaternary structure, homodimer and heterodimers.

The protein resides in the cell membrane. In Selaginella moellendorffii (Spikemoss), this protein is CASP-like protein 2U9.